Reading from the N-terminus, the 205-residue chain is Protein Nef (205 aa).

Glycine 2 carries N-myristoyl glycine; by host lipidation. At serine 6 the chain carries Phosphoserine; by host. Positions 61 to 65 (EESEE) are acidic; interacts with host PACS1 and PACS2; stabilizes the interaction of NEF/MHC-I with host AP1M1; necessary for MHC-I internalization. An SH3-binding; interaction with Src family tyrosine kinases region spans residues 69 to 78 (PVRPQVPLRP). The PxxP; stabilizes the interaction of NEF/MHC-I with host AP1M1; necessary for MHC-I internalization motif lies at 72 to 75 (PQVP). Residues 108-124 (EILDLWVYHTQGFFPDW) form a mediates dimerization, Nef-PTE1 interaction region. Positions 148–180 (VDPREVEEANTGENNCLLHPMSQHGMDDDEREV) are binding to ATP6V1H. The Dileucine internalization motif; necessary for CD4 internalization signature appears at 164–165 (LL). The Diacidic; necessary for CD4 internalization motif lies at 174-175 (DD).

It belongs to the lentivirus primate group Nef protein family. As to quaternary structure, monomer; cytosolic form. Homodimer; membrane bound form. Interacts with Nef associated p21-activated kinase (PAK2); this interaction activates PAK2. Associates with the Nef-MHC-I-AP1 complex; this complex is required for MHC-I internalization. Interacts (via C-terminus) with host PI3-kinase. Interacts with host PACS1; this interaction seems to be weak. Interacts with host PACS2. Interacts with host LCK and MAPK3; these interactions inhibit the kinase activity of the latter. Interacts with host ATP6V1H; this interaction may play a role in CD4 endocytosis. Associates with the CD4-Nef-AP2 complex; this complex is required for CD4 internalization. Interacts with host AP2 subunit alpha and AP2 subunit sigma2. Interacts with TCR-zeta chain; this interaction up-regulates the Fas ligand (FasL) surface expression. Interacts with host HCK, LYN, and SRC; these interactions activate the Src family kinases. Interacts with MAP3K5; this interaction inhibits the Fas and TNFR-mediated death signals. Interacts with beta-COP and PTE1. Interacts with human RACK1; this increases Nef phosphorylation by PKC. Interacts with TP53; this interaction decreases the half-life of TP53, protecting the infected cell against p53-mediated apoptosis. Post-translationally, the virion-associated Nef proteins are cleaved by the viral protease to release the soluble C-terminal core protein. Nef is probably cleaved concomitantly with viral structural proteins on maturation of virus particles. In terms of processing, myristoylated. Phosphorylated on serine residues, probably by host PKCdelta and theta.

It is found in the host cell membrane. It localises to the virion. The protein resides in the secreted. Its subcellular location is the host Golgi apparatus membrane. In terms of biological role, factor of infectivity and pathogenicity, required for optimal virus replication. Alters numerous pathways of T-lymphocyte function and down-regulates immunity surface molecules in order to evade host defense and increase viral infectivity. Alters the functionality of other immunity cells, like dendritic cells, monocytes/macrophages and NK cells. Functionally, in infected CD4(+) T-lymphocytes, down-regulates the surface MHC-I, mature MHC-II, CD4, CD28, CCR5 and CXCR4 molecules. Mediates internalization and degradation of host CD4 through the interaction of with the cytoplasmic tail of CD4, the recruitment of AP-2 (clathrin adapter protein complex 2), internalization through clathrin coated pits, and subsequent transport to endosomes and lysosomes for degradation. Diverts host MHC-I molecules to the trans-Golgi network-associated endosomal compartments by an endocytic pathway to finally target them for degradation. MHC-I down-regulation may involve AP-1 (clathrin adapter protein complex 1) or possibly Src family kinase-ZAP70/Syk-PI3K cascade recruited by PACS2. In consequence infected cells are masked for immune recognition by cytotoxic T-lymphocytes. Decreasing the number of immune receptors also prevents reinfection by more HIV particles (superinfection). Down-regulates host SERINC3 and SERINC5 thereby excluding these proteins from the viral particles. Virion infectivity is drastically higher when SERINC3 or SERINC5 are excluded from the viral envelope, because these host antiviral proteins impair the membrane fusion event necessary for subsequent virion penetration. Its function is as follows. Bypasses host T-cell signaling by inducing a transcriptional program nearly identical to that of anti-CD3 cell activation. Interaction with TCR-zeta chain up-regulates the Fas ligand (FasL). Increasing surface FasL molecules and decreasing surface MHC-I molecules on infected CD4(+) cells send attacking cytotoxic CD8+ T-lymphocytes into apoptosis. Plays a role in optimizing the host cell environment for viral replication without causing cell death by apoptosis. Protects the infected cells from apoptosis in order to keep them alive until the next virus generation is ready to strike. Inhibits the Fas and TNFR-mediated death signals by blocking MAP3K5/ASK1. Decreases the half-life of TP53, protecting the infected cell against p53-mediated apoptosis. Inhibits the apoptotic signals regulated by the Bcl-2 family proteins through the formation of a Nef/PI3-kinase/PAK2 complex that leads to activation of PAK2 and induces phosphorylation of host BAD. In terms of biological role, extracellular Nef protein targets CD4(+) T-lymphocytes for apoptosis by interacting with CXCR4 surface receptors. This Human immunodeficiency virus type 1 group M subtype A (isolate Z321) (HIV-1) protein is Protein Nef.